The primary structure comprises 218 residues: Eukaryotic translation initiation factor 4E-1 (218 aa).

The span at 1-11 shows a compositional bias: basic and acidic residues; sequence MQTEQPPKESQ. 2 disordered regions span residues 1 to 20 and 198 to 218; these read MQTEQPPKESQTENTVSEPQ and FSAHEDSSKSGSTRAKTRMSV. Residues 206 to 218 show a composition bias toward polar residues; it reads KSGSTRAKTRMSV.

It belongs to the eukaryotic initiation factor 4E family. As to quaternary structure, eIF4F is a multi-subunit complex, the composition of which varies with external and internal environmental conditions. It is composed of at least eIF4A, eIF4E and eIF4G. eIF4E is also known to interact with other partners.

In terms of biological role, recognizes and binds the 7-methylguanosine-containing mRNA cap during an early step in the initiation of protein synthesis and facilitates ribosome binding by inducing the unwinding of the mRNAs secondary structures. This is Eukaryotic translation initiation factor 4E-1 (tif451) from Schizosaccharomyces pombe (strain 972 / ATCC 24843) (Fission yeast).